Here is a 631-residue protein sequence, read N- to C-terminus: Quinoprotein alcohol dehydrogenase PedE (631 aa).

The N-terminal stretch at 1-33 (MTIRSLPALSPLALSVRVLLMAGSLALGNVATA) is a signal peptide. Ca(2+) contacts are provided by Asp-53, Thr-56, and Asp-59. Residue Glu-103 participates in pyrroloquinoline quinone binding. A disulfide bridge links Cys-147 with Cys-148. Pyrroloquinoline quinone-binding positions include Arg-153, Thr-197, and 215–217 (HGS). Glu-221 serves as a coordination point for Ca(2+). A disordered region spans residues 250-286 (GRLNGKDSTPTGDVKAPSWPDDPTTETGKVEAWSHGG). Asn-308 and Asp-358 together coordinate Ca(2+). Asp-358 functions as the Proton acceptor in the catalytic mechanism. Residue Arg-386 participates in pyrroloquinoline quinone binding. The tract at residues 421–443 (GRPVENPGQRPAKPLPGETKGKP) is disordered. Pyrroloquinoline quinone-binding residues include Trp-531 and Ala-595.

It belongs to the bacterial PQQ dehydrogenase family. In terms of assembly, homodimer. Interacts with cytochrome c550. It depends on pyrroloquinoline quinone as a cofactor. Ca(2+) serves as cofactor. In terms of processing, the disulfide ring formed between the two adjacent cysteine residues Cys-147 and Cys-148 is essential for efficient electron transfer at pH 7 from PedE to its natural electron acceptor cytochrome c550.

The protein resides in the periplasm. The catalysed reaction is a primary alcohol + 2 Fe(III)-[cytochrome c] = an aldehyde + 2 Fe(II)-[cytochrome c] + 2 H(+). It carries out the reaction ethanol + 2 Fe(III)-[cytochrome c] = acetaldehyde + 2 Fe(II)-[cytochrome c] + 2 H(+). The enzyme catalyses butan-1-ol + 2 Fe(III)-[cytochrome c] = butanal + 2 Fe(II)-[cytochrome c] + 2 H(+). It catalyses the reaction butan-2-ol + 2 Fe(III)-[cytochrome c] = butan-2-one + 2 Fe(II)-[cytochrome c] + 2 H(+). The catalysed reaction is 2-phenylethanol + 2 Fe(III)-[cytochrome c] = 2-phenylacetaldehyde + 2 Fe(II)-[cytochrome c] + 2 H(+). It carries out the reaction octan-1-ol + 2 Fe(III)-[cytochrome c] = octanal + 2 Fe(II)-[cytochrome c] + 2 H(+). The enzyme catalyses hexan-1-ol + 2 Fe(III)-[cytochrome c] = hexanal + 2 Fe(II)-[cytochrome c] + 2 H(+). It catalyses the reaction cinnamyl alcohol + 2 Fe(III)-[cytochrome c] = cinnamaldehyde + 2 Fe(II)-[cytochrome c] + 2 H(+). The catalysed reaction is farnesol + 2 Fe(III)-[cytochrome c] = farnesal + 2 Fe(II)-[cytochrome c] + 2 H(+). It carries out the reaction an aldehyde + 2 Fe(III)-[cytochrome c] + H2O = a carboxylate + 2 Fe(II)-[cytochrome c] + 3 H(+). The enzyme catalyses acetaldehyde + 2 Fe(III)-[cytochrome c] + H2O = 2 Fe(II)-[cytochrome c] + acetate + 3 H(+). It catalyses the reaction butanal + 2 Fe(III)-[cytochrome c] + H2O = butanoate + 2 Fe(II)-[cytochrome c] + 3 H(+). The catalysed reaction is hexanal + 2 Fe(III)-[cytochrome c] + H2O = hexanoate + 2 Fe(II)-[cytochrome c] + 3 H(+). It carries out the reaction octanal + 2 Fe(III)-[cytochrome c] + H2O = octanoate + 2 Fe(II)-[cytochrome c] + 3 H(+). Functionally, alcohol dehydrogenase that catalyzes the oxidation of a range of substrates, including linear and aromatic primary and secondary alcohols, as well as aldehydes, allowing bacterial growth with a variety of volatile organic compounds (VOCs) as carbon and energy sources. Uses a specific inducible cytochrome c550, encoded by the adjacent gene in the locus, as electron acceptor. The chain is Quinoprotein alcohol dehydrogenase PedE from Pseudomonas putida (strain ATCC 47054 / DSM 6125 / CFBP 8728 / NCIMB 11950 / KT2440).